Consider the following 410-residue polypeptide: WD repeat and FYVE domain-containing protein 1 (410 aa).

WD repeat units lie at residues 22–61, 66–105, 112–150, 153–192, 197–236, and 240–279; these read GHQDAVTAALLIPKEDGVITASEDRTIRVWLKRDSGQYWP, TMASPCSAMAYHHDSRRIFVGQDNGAVMEFHVSEDFNKMN, AHQNRVSAIIFSLAAEWVISTGHDKCVSWMCTRSGNMLG, FFSSWASCLQYDLDTQHAFVGDYSGQITLLKLEQNTCSVI, GHEGSIACLWWDPIQRLLFSGASDNSVIMWDIGGRKGRTL, and GHHDRVQSLCYLQLTRQLVSCSADGGIAVWNMDVSREEAP. Residues 281 to 352 form an FYVE-type zinc finger; the sequence is WLESDSCQKC…VCDSCYDSIK (72 aa). Positions 287, 290, 314, 317, 322, 325, 344, and 347 each coordinate Zn(2+). Residues 364–403 form a WD 7 repeat; that stretch reads EGKHNISHMSMDIARGLMVTCGTDRVVKIWDMTPVVGCSL. Ser-408 is subject to Phosphoserine.

Binds PtdIns3P in vitro with high specificity over other phosphoinositides. Interacts (via WD repeat 2) with tyrosine-phosphorylated TLR3 (via TIR domain) in response to poly(I:C). Interacts with TLR4 in response to LPS. Interacts with TICAM1 in response to poly(I:C).

The protein resides in the early endosome. Its function is as follows. Positively regulates TLR3- and TLR4-mediated signaling pathways by bridging the interaction between TLR3 or TLR4 and TICAM1. Promotes TLR3/4 ligand-induced activation of transcription factors IRF3 and NF-kappa-B, as well as the production of IFN-beta and inflammatory cytokines. This Mus musculus (Mouse) protein is WD repeat and FYVE domain-containing protein 1 (Wdfy1).